The sequence spans 254 residues: uncharacterized protein (254 aa).

This is an uncharacterized protein from Caenorhabditis elegans.